Here is a 258-residue protein sequence, read N- to C-terminus: Phycoerythrobilin:ferredoxin oxidoreductase (258 aa).

The protein belongs to the HY2 family.

It catalyses the reaction (3Z)-phycoerythrobilin + oxidized 2[4Fe-4S]-[ferredoxin] = 15,16-dihydrobiliverdin + reduced 2[4Fe-4S]-[ferredoxin] + 2 H(+). In terms of biological role, catalyzes the two-electron reduction of the C2 and C3(1) diene system of 15,16-dihydrobiliverdin. The polypeptide is Phycoerythrobilin:ferredoxin oxidoreductase (Prochlorococcus marinus (strain NATL2A)).